The sequence spans 591 residues: MTDKKNLRTPIVCVMGHVDHGKTTLLDKIRGTAIVSGEAGAITQHIGATEVPIDVIIDKLGDPRLRDRFMVPGLLFIDTPGHHAFTTLRSRGGALADLAIVVVDINEGFKPQTYESLQILKRFKTPFVVVANKIDRIGGWVSQKDMPFAATFKKQSSDVQARLETKLYEVIGELYNQGFAAERYDRVTNFQKTLGVVPVSAFTGEGIPDVLMVLLGLAQKFLEANLQYSAKGPGVGTVLEVKEEKGLGATLDIILYDGTLKKGDTVVIGSLGEPIRTKVRALLKPRELSEIRYESKFQQVSKVTAAAGVKISAPGLEGALAGSPIRVATEDNLEEIASQVKSEIDEVRIDTGSVGIMIKADTLGSLEALVHEFQKDEVPIRKAEVGDISHRDAVEASTVEDPLYSVIIGFNVKVHPDARDFLQESSVKVFTSDVIYRLVEDYQKYVKEQQEKAEKKIFETIIRPGKFKILPGCVFRQSKPAVVGVRVLGGVVRTNTDVMLENGNVVGKIKGLQSEGENIPSAKVGKEVAMAIEGATVGRQIKEEDVLYVNVPERHAKVLEHEIYESLSTDEKETLDIFLTLKRKDNPFWAK.

The 217-residue stretch at 7 to 223 (LRTPIVCVMG…LLGLAQKFLE (217 aa)) folds into the tr-type G domain. A G1 region spans residues 16–23 (GHVDHGKT). Residue 16–23 (GHVDHGKT) coordinates GTP. Positions 41–45 (AITQH) are G2. The segment at 78 to 81 (DTPG) is G3. GTP is bound by residues 78-82 (DTPGH) and 132-135 (NKID). Residues 132–135 (NKID) are G4. The G5 stretch occupies residues 200–202 (SAF).

The protein belongs to the TRAFAC class translation factor GTPase superfamily. Classic translation factor GTPase family. IF-2 subfamily.

Functionally, function in general translation initiation by promoting the binding of the formylmethionine-tRNA to ribosomes. Seems to function along with eIF-2. This chain is Probable translation initiation factor IF-2, found in Methanosarcina mazei (strain ATCC BAA-159 / DSM 3647 / Goe1 / Go1 / JCM 11833 / OCM 88) (Methanosarcina frisia).